The primary structure comprises 289 residues: Protoheme IX farnesyltransferase 2 (289 aa).

9 helical membrane passes run 13–33 (LEITILIDIVAIAAFLAVPGS), 37–57 (IYDLLILIFAGTLASMSASIF), 86–106 (LFFIIATAMVLLSFVTSFILL), 109–129 (VTSAFILGGFASYVLLYTIIL), 137–157 (IVIGGIAGSFPALAGWASITG), 159–179 (VSATSLFIAFLVFMWTPTHFW), 207–227 (EFWIMVNTSILVIYSILPLFI), 232–252 (VGLLYMPMAAVMDALLIYYVA), and 267–287 (AFHFSNMYMLMLLIGIMLILV).

It belongs to the UbiA prenyltransferase family. Protoheme IX farnesyltransferase subfamily.

The protein localises to the cell membrane. The catalysed reaction is heme b + (2E,6E)-farnesyl diphosphate + H2O = Fe(II)-heme o + diphosphate. The protein operates within porphyrin-containing compound metabolism; heme O biosynthesis; heme O from protoheme: step 1/1. Converts heme B (protoheme IX) to heme O by substitution of the vinyl group on carbon 2 of heme B porphyrin ring with a hydroxyethyl farnesyl side group. This is Protoheme IX farnesyltransferase 2 from Picrophilus torridus (strain ATCC 700027 / DSM 9790 / JCM 10055 / NBRC 100828 / KAW 2/3).